A 255-amino-acid chain; its full sequence is Diphthine synthase (255 aa).

S-adenosyl-L-methionine-binding positions include Leu9, Asp85, Val88, 113–114 (SI), Leu164, Ala207, and His232.

The protein belongs to the diphthine synthase family. Homodimer.

It catalyses the reaction 2-[(3S)-amino-3-carboxypropyl]-L-histidyl-[translation elongation factor 2] + 3 S-adenosyl-L-methionine = diphthine-[translation elongation factor 2] + 3 S-adenosyl-L-homocysteine + 3 H(+). It participates in protein modification; peptidyl-diphthamide biosynthesis. Its function is as follows. S-adenosyl-L-methionine-dependent methyltransferase that catalyzes the trimethylation of the amino group of the modified target histidine residue in translation elongation factor 2 (EF-2), to form an intermediate called diphthine. The three successive methylation reactions represent the second step of diphthamide biosynthesis. The protein is Diphthine synthase of Methanococcus maripaludis (strain C6 / ATCC BAA-1332).